The primary structure comprises 130 residues: MIGNWNYGTGRRKSAVARVFIKSGKGDIIVNGKPIKEYFARETSLMIVRQPLELTAHAETFDIKVNVTGGGETGQAGAVRHGITRALIDYDATLKSALSKAGYVTRDAREVERKKVGFHKARRRKQFSKR.

The protein belongs to the universal ribosomal protein uS9 family.

In Cupriavidus necator (strain ATCC 17699 / DSM 428 / KCTC 22496 / NCIMB 10442 / H16 / Stanier 337) (Ralstonia eutropha), this protein is Small ribosomal subunit protein uS9.